The primary structure comprises 291 residues: Lipoyl synthase, organellar chromatophore (291 aa).

[4Fe-4S] cluster contacts are provided by cysteine 33, cysteine 38, cysteine 44, cysteine 59, cysteine 63, cysteine 66, and serine 274. The 219-residue stretch at 45–263 (FAGGTATFLI…AIGELEMNFL (219 aa)) folds into the Radical SAM core domain.

Belongs to the radical SAM superfamily. Lipoyl synthase family. [4Fe-4S] cluster serves as cofactor.

It is found in the plastid. Its subcellular location is the organellar chromatophore. It catalyses the reaction [[Fe-S] cluster scaffold protein carrying a second [4Fe-4S](2+) cluster] + N(6)-octanoyl-L-lysyl-[protein] + 2 oxidized [2Fe-2S]-[ferredoxin] + 2 S-adenosyl-L-methionine + 4 H(+) = [[Fe-S] cluster scaffold protein] + N(6)-[(R)-dihydrolipoyl]-L-lysyl-[protein] + 4 Fe(3+) + 2 hydrogen sulfide + 2 5'-deoxyadenosine + 2 L-methionine + 2 reduced [2Fe-2S]-[ferredoxin]. It functions in the pathway protein modification; protein lipoylation via endogenous pathway; protein N(6)-(lipoyl)lysine from octanoyl-[acyl-carrier-protein]: step 2/2. Its function is as follows. Catalyzes the radical-mediated insertion of two sulfur atoms into the C-6 and C-8 positions of the octanoyl moiety bound to the lipoyl domains of lipoate-dependent enzymes, thereby converting the octanoylated domains into lipoylated derivatives. This Paulinella chromatophora protein is Lipoyl synthase, organellar chromatophore.